Here is a 2253-residue protein sequence, read N- to C-terminus: Protein Ycf2 (2253 aa).

1600–1607 (GFIGTGRS) is an ATP binding site.

The protein belongs to the Ycf2 family.

It localises to the plastid. Its subcellular location is the chloroplast stroma. In terms of biological role, probable ATPase of unknown function. Its presence in a non-photosynthetic plant (Epifagus virginiana) and experiments in tobacco indicate that it has an essential function which is probably not related to photosynthesis. The chain is Protein Ycf2 from Nymphaea alba (White water-lily).